A 470-amino-acid chain; its full sequence is Cyclic AMP-responsive element-binding protein 3-like protein 3 (470 aa).

Over 1–319 (MDGDISTGKM…TSKPAHAGTC (319 aa)) the chain is Cytoplasmic. The interval 59 to 145 (SDSDEFLNSI…PEPPRTQVHE (87 aa)) is disordered. The bZIP domain occupies 239 to 302 (VLKKIRRKIR…LSLLEQLKHL (64 aa)). The tract at residues 241-270 (KKIRRKIRNKQSAQESRKKKKEYIDGLENR) is basic motif. Positions 281-302 (LQRKVLHLEKQNLSLLEQLKHL) are leucine-zipper. A Glycyl lysine isopeptide (Lys-Gly) (interchain with G-Cter in ubiquitin) cross-link involves residue lysine 290. A helical; Signal-anchor for type II membrane protein transmembrane segment spans residues 320-340 (IAVLLLSFVLIILPSISPFTA). At 341 to 470 (NKVDSPGDFI…RVVQDALGVL (130 aa)) the chain is on the lumenal side. 2 N-linked (GlcNAc...) asparagine glycosylation sites follow: asparagine 410 and asparagine 417.

It belongs to the bZIP family. ATF subfamily. As to quaternary structure, binds DNA as a dimer. May form homodimers. Interacts with ATF6. Interacts with SYNV1/HRD1; this interaction leads to CREB3L3 ubiquitination and proteasomal degradation. In terms of processing, controlled by regulated intramembrane proteolysis (RIP). Following ER stress a fragment containing the cytoplasmic transcription factor domain is released by proteolysis. The cleavage seems to be performed sequentially by site-1 and site-2 proteases (PS1 and PS2). Post-translationally, N-glycosylation is required for optimal proteolytic activation. Ubiquitinated at Lys-290 by SYNV1/HRD1 via 'Lys-27'-linked ubiquitin.

Its subcellular location is the endoplasmic reticulum membrane. It is found in the nucleus. In terms of biological role, transcription factor that may act during endoplasmic reticulum stress by activating unfolded protein response target genes. Activated in response to cAMP stimulation. Binds the cAMP response element (CRE). Activates transcription through box-B element and CRE. Seems to function synergistically with ATF6. In acute inflammatory response, may activate expression of acute phase response (APR) genes. May be involved in growth suppression. Regulates FGF21 transcription. Plays a crucial role in the regulation of triglyceride metabolism and is required for the maintenance of normal plasma triglyceride concentrations. This is Cyclic AMP-responsive element-binding protein 3-like protein 3 (Creb3l3) from Rattus norvegicus (Rat).